We begin with the raw amino-acid sequence, 454 residues long: MDHEAAQLEKQHVHNVYESTAPYFSDLQSKAWPRVRQFLQEQKPGSLIADIGCGTGKYLKVNSQVHTVGCDYCGPLVEIARNRGCEAMVCDNLNLPFRDEGFDAIISIGVIHHFSTKQRRIRAIKEMARVLVPGGQLMIYVWAMEQKNRHFEKQDVLVPWNRALCSQLFSESSQSGRKRQCGYPERGHPYHPPCSECSCSVCFKEQCGSKRSHSVGYEPAMARTCFANISKEGEEEYGFYSTLGKSFRSWFFSRSLDESTLRKQIERVRPLKNTEVWASSTVTVQPSRHSSLDFDHQEPFSTKGQSLDEEVFVESSSGKHLEWLRAPGTLKHLNGDHQGEMRRNGGGNFLDSTNTGVNCVDAGNIEDDNPSASKILRRISAVDSTDFNPDDTMSVEDPQTDVLDSTAFMRYYHVFREGELCSLLKENVSELRILSSGNDHGNWCIIAEKKRGCD.

A Phosphoserine modification is found at S214.

The protein belongs to the methyltransferase superfamily. As to expression, down-regulated in breast, bladder, colorectal, cervix and testicular carcinomas.

May modify wobble uridines in specific arginine and glutamic acid tRNAs. Acts as a tumor suppressor by promoting the expression of LIN9. In Homo sapiens (Human), this protein is Probable tRNA methyltransferase 9B.